The chain runs to 245 residues: Adenylate kinase (245 aa).

15 to 20 (GSGKGT) serves as a coordination point for ATP. Positions 35–64 (SSGDLLRDAVSKDTPLSQEIKSYLDQGKLL) are NMP. AMP-binding positions include serine 36, arginine 41, 62–64 (KLL), 103–106 (GFPR), and glutamine 110. The tract at residues 143–176 (SRYICPACQGIYNEQQGFSSCPKCSVELIRRSDD) is LID. Position 144 (arginine 144) interacts with ATP. Zn(2+)-binding residues include cysteine 147 and cysteine 150. 153 to 154 (IY) contributes to the ATP binding site. Zn(2+) contacts are provided by cysteine 163 and cysteine 166. Positions 173 and 184 each coordinate AMP. Alanine 212 serves as a coordination point for ATP.

It belongs to the adenylate kinase family. As to quaternary structure, monomer.

The protein resides in the cytoplasm. It catalyses the reaction AMP + ATP = 2 ADP. It functions in the pathway purine metabolism; AMP biosynthesis via salvage pathway; AMP from ADP: step 1/1. Its function is as follows. Catalyzes the reversible transfer of the terminal phosphate group between ATP and AMP. Plays an important role in cellular energy homeostasis and in adenine nucleotide metabolism. The sequence is that of Adenylate kinase from Chlamydia trachomatis serovar A (strain ATCC VR-571B / DSM 19440 / HAR-13).